The following is a 938-amino-acid chain: Protein SEY1 (938 aa).

Residues 1–159 are disordered; the sequence is MTSQSHGAPP…QKSAKSTPGS (159 aa). Over 1–839 the chain is Cytoplasmic; it reads MTSQSHGAPP…KRSTIQSTTQ (839 aa). Residues 33–45 are compositionally biased toward low complexity; the sequence is SVSSSHSSHSPVT. The span at 74–94 shows a compositional bias: pro residues; the sequence is IAAPEPIAAPEPIPAPEPIAA. The span at 100–118 shows a compositional bias: basic and acidic residues; sequence LKSEHKPVEREHKPVERKP. The span at 146–158 shows a compositional bias: polar residues; that stretch reads VPTSQKSAKSTPG. Residues 192–423 enclose the GB1/RHD3-type G domain; the sequence is GLDYHVVAVF…DPNYVFKPVY (232 aa). GTP is bound at residue 202–209; the sequence is GSQSTGKS. Positions 603-630 form a coiled coil; it reads SYDDTLAALEQELDTLRDHKSKVEIDRL. A helical membrane pass occupies residues 840–860; that stretch reads IPLYMYGLLLLLGWNEIMAVL. The Lumenal segment spans residues 861 to 863; it reads RSP. The helical transmembrane segment at 864 to 884 threads the bilayer; sequence VYFMFLLVAAGAAYVIHTLHL. At 885-938 the chain is on the cytoplasmic side; it reads WGPLTHMTNTMIAEATDMAKAKLKQVLNEAPTGETREREAPVGSSRDDVELKDL. A disordered region spans residues 911-938; that stretch reads LNEAPTGETREREAPVGSSRDDVELKDL. Residues 918–938 show a composition bias toward basic and acidic residues; it reads ETREREAPVGSSRDDVELKDL.

The protein belongs to the TRAFAC class dynamin-like GTPase superfamily. GB1/RHD3 GTPase family. RHD3 subfamily.

It is found in the endoplasmic reticulum membrane. In terms of biological role, cooperates with the reticulon proteins and tubule-shaping DP1 family proteins to generate and maintain the structure of the tubular endoplasmic reticulum network. Has GTPase activity, which is required for its function in ER organization. This chain is Protein SEY1, found in Yarrowia lipolytica (strain CLIB 122 / E 150) (Yeast).